Consider the following 369-residue polypeptide: 3-dehydroquinate synthase (369 aa).

Residues 75–80, 109–113, 133–134, Lys146, Lys155, and 173–176 contribute to the NAD(+) site; these read DGEEHK, GVIGD, TT, and TLKT. Zn(2+) contacts are provided by Glu188, His251, and His268.

The protein belongs to the sugar phosphate cyclases superfamily. Dehydroquinate synthase family. Requires Co(2+) as cofactor. It depends on Zn(2+) as a cofactor. NAD(+) is required as a cofactor.

It localises to the cytoplasm. The enzyme catalyses 7-phospho-2-dehydro-3-deoxy-D-arabino-heptonate = 3-dehydroquinate + phosphate. Its pathway is metabolic intermediate biosynthesis; chorismate biosynthesis; chorismate from D-erythrose 4-phosphate and phosphoenolpyruvate: step 2/7. Catalyzes the conversion of 3-deoxy-D-arabino-heptulosonate 7-phosphate (DAHP) to dehydroquinate (DHQ). In Legionella pneumophila (strain Paris), this protein is 3-dehydroquinate synthase.